A 513-amino-acid polypeptide reads, in one-letter code: ATP synthase subunit alpha (513 aa).

Residue 169–176 coordinates ATP; the sequence is GDRQTGKT.

It belongs to the ATPase alpha/beta chains family. In terms of assembly, F-type ATPases have 2 components, CF(1) - the catalytic core - and CF(0) - the membrane proton channel. CF(1) has five subunits: alpha(3), beta(3), gamma(1), delta(1), epsilon(1). CF(0) has three main subunits: a(1), b(2) and c(9-12). The alpha and beta chains form an alternating ring which encloses part of the gamma chain. CF(1) is attached to CF(0) by a central stalk formed by the gamma and epsilon chains, while a peripheral stalk is formed by the delta and b chains.

The protein resides in the cell inner membrane. It carries out the reaction ATP + H2O + 4 H(+)(in) = ADP + phosphate + 5 H(+)(out). Functionally, produces ATP from ADP in the presence of a proton gradient across the membrane. The alpha chain is a regulatory subunit. This is ATP synthase subunit alpha from Thiobacillus denitrificans (strain ATCC 25259 / T1).